We begin with the raw amino-acid sequence, 491 residues long: Cobyric acid synthase (491 aa).

The 191-residue stretch at 249 to 439 folds into the GATase cobBQ-type domain; sequence PIDIAVIKLP…IHGVFDGVEF (191 aa). Catalysis depends on Cys329, which acts as the Nucleophile. His431 is an active-site residue.

The protein belongs to the CobB/CobQ family. CobQ subfamily.

The protein operates within cofactor biosynthesis; adenosylcobalamin biosynthesis. Its function is as follows. Catalyzes amidations at positions B, D, E, and G on adenosylcobyrinic A,C-diamide. NH(2) groups are provided by glutamine, and one molecule of ATP is hydrogenolyzed for each amidation. The chain is Cobyric acid synthase from Clostridium tetani (strain Massachusetts / E88).